Reading from the N-terminus, the 171-residue chain is Co-chaperone protein HscB homolog (171 aa).

The region spanning 2–74 is the J domain; that stretch reads NHFELFGLPS…ISRAEYILAE (73 aa).

It belongs to the HscB family. In terms of assembly, interacts with HscA and stimulates its ATPase activity.

Its function is as follows. Co-chaperone involved in the maturation of iron-sulfur cluster-containing proteins. Seems to help targeting proteins to be folded toward HscA. In Vibrio parahaemolyticus serotype O3:K6 (strain RIMD 2210633), this protein is Co-chaperone protein HscB homolog.